A 134-amino-acid polypeptide reads, in one-letter code: Phosphoribosyl-ATP pyrophosphatase 2 (134 aa).

The protein belongs to the PRA-PH family.

The protein localises to the cytoplasm. It carries out the reaction 1-(5-phospho-beta-D-ribosyl)-ATP + H2O = 1-(5-phospho-beta-D-ribosyl)-5'-AMP + diphosphate + H(+). The protein operates within amino-acid biosynthesis; L-histidine biosynthesis; L-histidine from 5-phospho-alpha-D-ribose 1-diphosphate: step 2/9. In Bradyrhizobium diazoefficiens (strain JCM 10833 / BCRC 13528 / IAM 13628 / NBRC 14792 / USDA 110), this protein is Phosphoribosyl-ATP pyrophosphatase 2 (hisE2).